Here is a 321-residue protein sequence, read N- to C-terminus: Cytochrome c biogenesis protein CcsA (321 aa).

A run of 7 helical transmembrane segments spans residues 9 to 29 (ILTH…LITL), 44 to 64 (GMIA…VSSG), 68 to 88 (LSNL…LHTI), 143 to 163 (MLLS…LLII), 225 to 245 (VISL…VWAN), 259 to 273 (TWAF…IYLH), and 288 to 308 (VASI…LLGI).

This sequence belongs to the CcmF/CycK/Ccl1/NrfE/CcsA family. As to quaternary structure, may interact with Ccs1.

Its subcellular location is the plastid. It localises to the chloroplast thylakoid membrane. In terms of biological role, required during biogenesis of c-type cytochromes (cytochrome c6 and cytochrome f) at the step of heme attachment. In Saccharum hybrid (Sugarcane), this protein is Cytochrome c biogenesis protein CcsA.